Here is a 421-residue protein sequence, read N- to C-terminus: F-box protein At2g17690 (421 aa).

Positions 2–50 (GDWSKLPEELLGLIALRLYSVIELIRFRSICKSWRSSASGVNKNHSLSS) constitute an F-box domain.

Its function is as follows. Involved in heat stress response. Contributes to recovery from heat stress. The sequence is that of F-box protein At2g17690 from Arabidopsis thaliana (Mouse-ear cress).